A 232-amino-acid polypeptide reads, in one-letter code: Putative homeobox protein NANOG2 (232 aa).

The disordered stretch occupies residues 1–39 (MDLPIQDSHDSSTSPKGKQPTTAEKSATKKEDKVPVKKQ). Polar residues predominate over residues 11–25 (SSTSPKGKQPTTAEK). Residues 26–35 (SATKKEDKVP) are compositionally biased toward basic and acidic residues. 8 tandem repeats follow at residues 123–127 (WSNQT), 128–132 (WNNST), 133–137 (WSNQT), 143–147 (WSNHS), 148–152 (WNTQT), 153–157 (WCTQS), 158–162 (WNNQA), and 163–167 (WNSPF). The tract at residues 123–167 (WSNQTWNNSTWSNQTQNIQSWSNHSWNTQTWCTQSWNNQAWNSPF) is 8 X repeats starting with a Trp in each unit. The sufficient for transactivation activity stretch occupies residues 123 to 167 (WSNQTWNNSTWSNQTQNIQSWSNHSWNTQTWCTQSWNNQAWNSPF). Positions 168-232 (YNCGEESLQS…YSMNMQPEDV (65 aa)) are sufficient for strong transactivation activity.

Belongs to the Nanog homeobox family.

Its subcellular location is the nucleus. Functionally, probable transcriptional regulator. The polypeptide is Putative homeobox protein NANOG2 (NANOGP1) (Homo sapiens (Human)).